The primary structure comprises 327 residues: GMP reductase (327 aa).

Cysteine 176 serves as the catalytic Thioimidate intermediate. 205 to 228 (IIADGGIRTHGDIAKSIRFGASMV) is a binding site for NADP(+).

Belongs to the IMPDH/GMPR family. GuaC type 2 subfamily.

It catalyses the reaction IMP + NH4(+) + NADP(+) = GMP + NADPH + 2 H(+). Catalyzes the irreversible NADPH-dependent deamination of GMP to IMP. It functions in the conversion of nucleobase, nucleoside and nucleotide derivatives of G to A nucleotides, and in maintaining the intracellular balance of A and G nucleotides. This Streptococcus agalactiae serotype V (strain ATCC BAA-611 / 2603 V/R) protein is GMP reductase.